A 157-amino-acid chain; its full sequence is MSYNITSSNQYQYFAAMWAEPTAMLNQCVSALSQSYQTQAARDTVRQQFSNLLSAIVTPNQRFPETGYRMYINSAVLKPLYESLMKSFDTRNRIIETEEESRPSASEVANATQRVDDATVAIRSQIQLLLNELSNGHGLMNRAEFEVLLPWATAPAT.

Position 2 is an N-acetylserine; by host (Ser2).

This sequence belongs to the virgaviridae capsid protein family.

The protein localises to the virion. Its function is as follows. Capsid protein self-assembles to form rod-shaped virions about 18 nm in diameter with a central canal enclosing the viral genomic RNA. The sequence is that of Capsid protein (CP) from Ribgrass mosaic virus (RMV).